Consider the following 427-residue polypeptide: Trigger factor (427 aa).

The region spanning 163 to 248 (GDTVVIDFVG…IHEVKAKEVP (86 aa)) is the PPIase FKBP-type domain.

The protein belongs to the FKBP-type PPIase family. Tig subfamily.

Its subcellular location is the cytoplasm. The catalysed reaction is [protein]-peptidylproline (omega=180) = [protein]-peptidylproline (omega=0). Functionally, involved in protein export. Acts as a chaperone by maintaining the newly synthesized protein in an open conformation. Functions as a peptidyl-prolyl cis-trans isomerase. This is Trigger factor from Streptococcus mutans serotype c (strain ATCC 700610 / UA159).